The sequence spans 494 residues: MKNNTTQSLLLLLLFFFFFFEISHSLSISSNAPLSDTEVRFIQRRQLLYYRDEFGDRGENVTVDPSLIFENPRLRSAYIALQAWKQAILSDPNNITVNWIGSNVCNYTGVFCSKALDNRKIRTVAGIDLNHADIAGYLPEELGLLTDLALFHVNSNRFCGTVPHKFKQLKLLFELDLSNNRFAGKFPTVVLHLPSLKFLDLRFNEFEGTVPKELFSKNLDAIFINHNRFRFELPENFGDSPVSVIVLANNHFHGCIPTSLVEMKNLNEIIFMNNGLNSCLPADIGRLKNVTVFDVSFNELVGPLPESVGGMVEVEQLNVAHNLLSGKIPASICQLPKLENFTYSYNFFTGEAPVCLRLSEFDDRRNCLPGRPAQRSSRQCSAFLSRPSVDCGSFGCGRSVVKPSPPIVALPPPPPPSPPLPPPVYSPPPSPPVFSPPPSPPVYSPPPPPSIHYSSPPPPPVHHSSPPPPSPEFEGPLPPVIGVSYASPPPPPFY.

A signal peptide spans 1–25; that stretch reads MKNNTTQSLLLLLLFFFFFFEISHS. Asn60, Asn94, and Asn106 each carry an N-linked (GlcNAc...) asparagine glycan. LRR repeat units lie at residues 121-145, 146-168, 169-193, 194-217, 219-240, 242-263, 264-287, 289-311, and 312-335; these read IRTV…LGLL, TDLA…KFKQ, LKLL…VLHL, PSLK…LFSK, LDAI…FGDS, VSVI…LVEM, KNLN…IGRL, NVTV…VGGM, and VEVE…ICQL. Asn289 carries N-linked (GlcNAc...) asparagine glycosylation. N-linked (GlcNAc...) asparagine glycosylation is present at Asn340. A contains the Ser-Pro(4) repeats region spans residues 404 to 494; sequence SPPIVALPPP…YASPPPPPFY (91 aa). Residues 422-479 show a composition bias toward pro residues; the sequence is PPVYSPPPSPPVFSPPPSPPVYSPPPPPSIHYSSPPPPPVHHSSPPPPSPEFEGPLPP. A disordered region spans residues 422–482; it reads PPVYSPPPSP…FEGPLPPVIG (61 aa).

Hydroxylated on proline residues in the S-P-P-P-P repeat. Post-translationally, O-glycosylated on hydroxyprolines. As to expression, expressed in roots, stems, leaves and flowers, mostly in vascular tissues.

The protein resides in the secreted. It localises to the cell wall. Modulates cell morphogenesis by regulating cell wall formation and assembly, and/or growth polarization. This chain is Leucine-rich repeat extensin-like protein 4 (LRX4), found in Arabidopsis thaliana (Mouse-ear cress).